The primary structure comprises 238 residues: Phosphoribosylaminoimidazole-succinocarboxamide synthase (238 aa).

It belongs to the SAICAR synthetase family.

It catalyses the reaction 5-amino-1-(5-phospho-D-ribosyl)imidazole-4-carboxylate + L-aspartate + ATP = (2S)-2-[5-amino-1-(5-phospho-beta-D-ribosyl)imidazole-4-carboxamido]succinate + ADP + phosphate + 2 H(+). It functions in the pathway purine metabolism; IMP biosynthesis via de novo pathway; 5-amino-1-(5-phospho-D-ribosyl)imidazole-4-carboxamide from 5-amino-1-(5-phospho-D-ribosyl)imidazole-4-carboxylate: step 1/2. The protein is Phosphoribosylaminoimidazole-succinocarboxamide synthase of Chlorobium phaeovibrioides (strain DSM 265 / 1930) (Prosthecochloris vibrioformis (strain DSM 265)).